The chain runs to 127 residues: Apolipoprotein C-IV (127 aa).

The signal sequence occupies residues 1–27 (MSLLRNRLQDLPALCLCVLVLACIGAC). An N-linked (GlcNAc...) asparagine glycan is attached at Asn63.

The protein belongs to the apolipoprotein C4 family.

The protein resides in the secreted. Its function is as follows. May participate in lipoprotein metabolism. In Colobus guereza (Mantled guereza), this protein is Apolipoprotein C-IV (APOC4).